The sequence spans 206 residues: Thymidylate kinase (206 aa).

11-18 (GIDGAGKT) lines the ATP pocket.

Belongs to the thymidylate kinase family.

The enzyme catalyses dTMP + ATP = dTDP + ADP. Functionally, phosphorylation of dTMP to form dTDP in both de novo and salvage pathways of dTTP synthesis. This is Thymidylate kinase from Paraburkholderia phytofirmans (strain DSM 17436 / LMG 22146 / PsJN) (Burkholderia phytofirmans).